The primary structure comprises 422 residues: UDP-N-acetylglucosamine 1-carboxyvinyltransferase (422 aa).

22-23 (KN) is a binding site for phosphoenolpyruvate. Arginine 94 lines the UDP-N-acetyl-alpha-D-glucosamine pocket. The Proton donor role is filled by cysteine 118. A 2-(S-cysteinyl)pyruvic acid O-phosphothioketal modification is found at cysteine 118. UDP-N-acetyl-alpha-D-glucosamine-binding positions include 123–127 (RPVDL), aspartate 308, and isoleucine 330.

The protein belongs to the EPSP synthase family. MurA subfamily.

It is found in the cytoplasm. The enzyme catalyses phosphoenolpyruvate + UDP-N-acetyl-alpha-D-glucosamine = UDP-N-acetyl-3-O-(1-carboxyvinyl)-alpha-D-glucosamine + phosphate. It functions in the pathway cell wall biogenesis; peptidoglycan biosynthesis. Cell wall formation. Adds enolpyruvyl to UDP-N-acetylglucosamine. The sequence is that of UDP-N-acetylglucosamine 1-carboxyvinyltransferase from Dinoroseobacter shibae (strain DSM 16493 / NCIMB 14021 / DFL 12).